The primary structure comprises 97 residues: Peptide Y (97 aa).

An N-terminal signal peptide occupies residues 1–28 (MANMLRSWMMLAALAVCLLVCLSSFADA). Position 64 is a tyrosine amide (Y64). Positions 68-97 (STPEQAVAWLLFGADSSQDAEPRLDYSDQW) are cleaved as a propeptide — C-terminal extension.

The protein belongs to the NPY family.

Its subcellular location is the secreted. The protein is Peptide Y of Dicentrarchus labrax (European seabass).